A 356-amino-acid polypeptide reads, in one-letter code: Carminomycin 4-O-methyltransferase DauK (356 aa).

S-adenosyl-L-methionine is bound at residue R153. Substrate is bound at residue D163. Residues G187, E210, 237–238 (DF), and S252 each bind S-adenosyl-L-methionine. Substrate is bound by residues N257 and R303.

This sequence belongs to the class I-like SAM-binding methyltransferase superfamily. Cation-independent O-methyltransferase family. As to quaternary structure, homodimer and homotetramer in equilibrium.

The catalysed reaction is carminomycin + S-adenosyl-L-methionine = daunorubicin + S-adenosyl-L-homocysteine + H(+). The protein operates within antibiotic biosynthesis; daunorubicin biosynthesis. It functions in the pathway antibiotic biosynthesis; carminomycin biosynthesis. With respect to regulation, strongly inhibited by S-adenosyl-L-homocysteine and weakly by adenine and methionine. Involved in the biosynthesis of the anthracyclines carminomycin and daunorubicin (daunomycin) which are aromatic polyketide antibiotics that exhibit high cytotoxicity and are widely applied in the chemotherapy of a variety of cancers. In vivo, catalyzes the transfer of a methyl group from S-adenosyl-L-methionine to the 4-O-position of carminomycin to form daunorubicin. In vitro, it also methylates the anthracyclines rhodomycin D (10-carbomethoxy-13-deoxycarminomycin), 10-carboxy-13-deoxycarminomycin, 13-deoxy-carminomycin and 13-dihydrocarminomycin at the 4-hydroxyl position. This is Carminomycin 4-O-methyltransferase DauK (dauK) from Streptomyces sp. (strain C5).